Consider the following 701-residue polypeptide: Polyribonucleotide nucleotidyltransferase (701 aa).

The Mg(2+) site is built by Asp485 and Asp491. The KH domain occupies 552–611; sequence PRIIKIRINPEKIRDVIGKGGAVIRALTEETGTTIDITDDGTVMIACVNAEGGELAKKRI. The region spanning 621 to 689 is the S1 motif domain; it reads GRVYDGTVLK…DKGRLRLSMK (69 aa).

Belongs to the polyribonucleotide nucleotidyltransferase family. It depends on Mg(2+) as a cofactor.

The protein resides in the cytoplasm. The enzyme catalyses RNA(n+1) + phosphate = RNA(n) + a ribonucleoside 5'-diphosphate. Involved in mRNA degradation. Catalyzes the phosphorolysis of single-stranded polyribonucleotides processively in the 3'- to 5'-direction. This Nitrosospira multiformis (strain ATCC 25196 / NCIMB 11849 / C 71) protein is Polyribonucleotide nucleotidyltransferase.